The chain runs to 215 residues: uncharacterized protein (215 aa).

Helical transmembrane passes span 9–29 (WTFYFAGLIILAFGVSLTIEG), 50–70 (LTVGQWSIIIGALIVGFTSLF), 77–97 (IGALLNMVLIGVFIDFFNFIL), 107–127 (IIVFSLGVVLIGYGVGVYVSA), and 160–180 (ILFAAWGMGGPIGFGTILTAI).

The protein localises to the cell membrane. This is an uncharacterized protein from Bacillus subtilis (strain 168).